A 167-amino-acid polypeptide reads, in one-letter code: Endoribonuclease YbeY (167 aa).

The Zn(2+) site is built by His131, His135, and His141.

The protein belongs to the endoribonuclease YbeY family. It depends on Zn(2+) as a cofactor.

It is found in the cytoplasm. Its function is as follows. Single strand-specific metallo-endoribonuclease involved in late-stage 70S ribosome quality control and in maturation of the 3' terminus of the 16S rRNA. This chain is Endoribonuclease YbeY, found in Rickettsia rickettsii (strain Sheila Smith).